Consider the following 350-residue polypeptide: Melatonin receptor type 1A-A (350 aa).

The Extracellular segment spans residues 1–29; it reads MFMNGSSLNSSALDPSEQALQRPPWVTTT. N4 and N9 each carry an N-linked (GlcNAc...) asparagine glycan. A helical transmembrane segment spans residues 30–50; that stretch reads LGCFLIFTIVVDILGNLLVIF. The Cytoplasmic segment spans residues 51-63; the sequence is SVYRNKKLQNAGN. The chain crosses the membrane as a helical span at residues 64 to 84; it reads IFVVSLAVADLVVAIYPYPLV. Residues 85–101 lie on the Extracellular side of the membrane; sequence LTSIFHRGWNLGYMHCQ. C100 and C177 are oxidised to a cystine. Residues 102 to 122 traverse the membrane as a helical segment; it reads ISGFLMGVSVIGSIFNITGIA. The Cytoplasmic portion of the chain corresponds to 123-144; it reads INCYCYICHSLKYDKLYSDKNS. A helical transmembrane segment spans residues 145–165; sequence VCYVLLIWALTVLAIVPNLFV. Topologically, residues 166–187 are extracellular; that stretch reads GSLQYDPRVYSCTFEQSASSAY. Residues 188–208 form a helical membrane-spanning segment; it reads TIAVVFFHFILPIMIVTYCYL. Residues 209–240 lie on the Cytoplasmic side of the membrane; the sequence is RIWVLVIQVRRRVKNDNRPKITPHDVRNFVTM. The helical transmembrane segment at 241–261 threads the bilayer; it reads FVVFVLFAVCWAPLNFIGLAV. Topologically, residues 262 to 267 are extracellular; that stretch reads AISPER. The chain crosses the membrane as a helical span at residues 268-288; sequence VVPLIPEWLFVASYFMAYFNS. At 289-350 the chain is on the cytoplasmic side; sequence CLNAIVYGVL…NNNQVKVDSV (62 aa).

It belongs to the G-protein coupled receptor 1 family.

Its subcellular location is the cell membrane. High affinity receptor for melatonin. The activity of this receptor is mediated by pertussis toxin sensitive G proteins that inhibits adenylate cyclase activity. The polypeptide is Melatonin receptor type 1A-A (mtnr1aa) (Danio rerio (Zebrafish)).